The primary structure comprises 257 residues: Indole-3-glycerol phosphate synthase (257 aa).

This sequence belongs to the TrpC family.

It carries out the reaction 1-(2-carboxyphenylamino)-1-deoxy-D-ribulose 5-phosphate + H(+) = (1S,2R)-1-C-(indol-3-yl)glycerol 3-phosphate + CO2 + H2O. It participates in amino-acid biosynthesis; L-tryptophan biosynthesis; L-tryptophan from chorismate: step 4/5. This chain is Indole-3-glycerol phosphate synthase, found in Chlorobium chlorochromatii (strain CaD3).